Here is a 309-residue protein sequence, read N- to C-terminus: MGKRPPIPPDIENGPPPPARPHFRPPIPVPWVAWLVPLILAANFVTFATTMYVNDCPARSDECLLFDVLGRLSFQPIKENMLLGPSIPTLRKLGALERRLVEEGERWRLISCIWLHGGFLHLMANMISLMCIGMRLEQEFGFMRIGALYVISGLGGSLVSCLTDSQGERVSVGASGALFGLLGAMLSELITNWTIYENKCTALMTLILIIVLNLSVGFLPRVDNSAHFGGFLAGFFLGFVLLLRPQYGYVNPKYIPPGYDMKHKKSKHKCYQHIFRFTSLAILLAGFIAGYTKLLREHTIQSMPFRDFN.

7 helical membrane passes run 27–47, 113–133, 140–160, 170–190, 200–220, 222–242, and 274–294; these read IPVP…FVTF, IWLH…MCIG, FGFM…SLVS, VSVG…SELI, CTAL…GFLP, VDNS…FVLL, and IFRF…YTKL. Ser175 functions as the Nucleophile in the catalytic mechanism. His227 acts as the Charge relay system in catalysis.

It belongs to the peptidase S54 family.

It localises to the membrane. It catalyses the reaction Cleaves type-1 transmembrane domains using a catalytic dyad composed of serine and histidine that are contributed by different transmembrane domains.. Its function is as follows. Probable rhomboid-type serine protease that catalyzes intramembrane proteolysis. May function in reproductive organs maturation. The sequence is that of RHOMBOID-like protein 5 from Arabidopsis thaliana (Mouse-ear cress).